The primary structure comprises 152 residues: Ribosome maturation factor RimP (152 aa).

Belongs to the RimP family.

It localises to the cytoplasm. In terms of biological role, required for maturation of 30S ribosomal subunits. This Francisella tularensis subsp. tularensis (strain FSC 198) protein is Ribosome maturation factor RimP.